A 737-amino-acid chain; its full sequence is ARMADILLO BTB ARABIDOPSIS PROTEIN 1 (737 aa).

9 ARM repeats span residues 112-154, 165-212, 215-254, 257-296, 299-338, 341-380, 382-421, 456-495, and 497-536; these read DENV…KDCA, PGYQ…NIAH, PRIK…TVSF, DENK…NLVH, PDIK…QFAA, SDCK…RLAQ, AHNQ…GLAD, LKRL…HLCD, and KDGK…ELAK. Residues 568 to 635 form the BTB domain; sequence SDVTFLIDGK…IYSGRINIAK (68 aa).

In terms of assembly, forms a heterodimeric complex with TCP24. Interacts with the origin recognition complex (preRC) components ORC1A, ORC1B, CDT1A and CDT1B. Interacts with DUF7/AIP1. Weakly expressed in the emerging lateral roots and mainly expressed in the shoot apex, young leaves and flower buds.

It is found in the nucleus. Its pathway is protein modification; protein ubiquitination. May act as a substrate-specific adapter of an E3 ubiquitin-protein ligase complex (CUL3-RBX1-BTB) which mediates the ubiquitination and subsequent proteasomal degradation of target proteins. In association with TCP24, exerts a negative role in cell proliferation in leaves, possibly by inhibiting mitotic DNA replication. The chain is ARMADILLO BTB ARABIDOPSIS PROTEIN 1 (ABAP1) from Arabidopsis thaliana (Mouse-ear cress).